We begin with the raw amino-acid sequence, 345 residues long: Papain (345 aa).

Residues 1–18 form the signal peptide; it reads MAMIPSISKLLFVAICLF. A propeptide spans 19-133 (activation peptide); that stretch reads VYMGLSFGDF…EEVLNDGDVN (115 aa). 3 disulfides stabilise this stretch: Cys155–Cys196, Cys189–Cys228, and Cys286–Cys333. Cys158 is a catalytic residue. Cys158 is an E64 binding site. Position 158 (Cys158) interacts with leupeptin. Active-site residues include His292 and Asn308.

The protein belongs to the peptidase C1 family.

It carries out the reaction Hydrolysis of proteins with broad specificity for peptide bonds, but preference for an amino acid bearing a large hydrophobic side chain at the P2 position. Does not accept Val in P1'.. With respect to regulation, repressed by the active-site-directed cysteine protease inhibitor E64 (L-trans-epoxysuccinyl-leucylamide-(4-guanido)-butane) produced by Aspergillus japonicus. Inhibited by the inhibitor of cysteine proteases from Trypanosoma brucei (TbICP, rhodesain) and Colocasia esculenta cv. Kaohsiung no. 1 (CeCPI, tarocystatin). Repressed by leupeptin, a peptidic cysteine, serine and threonine protease inhibitor. Cysteine proteinase with a high level of diversity in substrate specificity, an amino acid bearing a large hydrophobic side chain at the P2 position is preferred. The chain is Papain from Carica papaya (Papaya).